We begin with the raw amino-acid sequence, 120 residues long: NADH-ubiquinone oxidoreductase chain 3 (120 aa).

3 consecutive transmembrane segments (helical) span residues 6–26 (LLFF…LTWV), 63–83 (IVCV…PFFF), and 85–105 (FFLV…FVFY).

The protein belongs to the complex I subunit 3 family.

The protein localises to the mitochondrion membrane. The enzyme catalyses a ubiquinone + NADH + 5 H(+)(in) = a ubiquinol + NAD(+) + 4 H(+)(out). In terms of biological role, core subunit of the mitochondrial membrane respiratory chain NADH dehydrogenase (Complex I) that is believed to belong to the minimal assembly required for catalysis. Complex I functions in the transfer of electrons from NADH to the respiratory chain. The immediate electron acceptor for the enzyme is believed to be ubiquinone. The sequence is that of NADH-ubiquinone oxidoreductase chain 3 (ND3) from Paramecium tetraurelia.